The chain runs to 424 residues: tRNA(Met) cytidine acetate ligase (424 aa).

Residues 7–20 (ITEY…HLHH), Gly102, Asn174, and Arg199 contribute to the ATP site.

The protein belongs to the TmcAL family.

Its subcellular location is the cytoplasm. It catalyses the reaction cytidine(34) in elongator tRNA(Met) + acetate + ATP = N(4)-acetylcytidine(34) in elongator tRNA(Met) + AMP + diphosphate. Functionally, catalyzes the formation of N(4)-acetylcytidine (ac(4)C) at the wobble position of elongator tRNA(Met), using acetate and ATP as substrates. First activates an acetate ion to form acetyladenylate (Ac-AMP) and then transfers the acetyl group to tRNA to form ac(4)C34. This chain is tRNA(Met) cytidine acetate ligase, found in Alkaliphilus metalliredigens (strain QYMF).